The following is a 396-amino-acid chain: Glideosome-associated protein 50 (396 aa).

Over 1 to 369 the chain is Lumenal; that stretch reads MNYCKTTFHI…PMGNKDTFVR (369 aa). Residues His-195 and His-256 each coordinate a metal cation. Residues 370 to 390 form a helical membrane-spanning segment; sequence VVGTIGILIGSVIVFIGASSF. The Cytoplasmic portion of the chain corresponds to 391–396; it reads LSKNMK.

Belongs to the metallophosphoesterase superfamily. Purple acid phosphatase family. In terms of assembly, component of the glideosome complex composed of GAP50, GAP45, MTIP and MyoA; the complex is formed during the late schizont stage and in merozoites. MyoA, MTIP and GAP45 probably form an initial complex in the cytoplasm which is then recruited to the outer face of the inner membrane complex via the interaction with GAP50. Interacts with GAP45; the interaction is independent of GAP45 phosphorylation status and can also occur independently of the formation of the glideosome complex. Interacts with human factor H isoform CFH (via sushi 6-7 domains) and isoform FHL-1 (via sushi 6-7 domains); the interaction occurs in the vector mosquito midgut at the surface of activated gametocytes; the interaction protects the parasite from alternative complement pathway-mediated elimination. It depends on a metal cation as a cofactor. Post-translationally, the N-terminus signal is likely to be cleaved.

It is found in the inner membrane complex. The protein resides in the cell membrane. Its subcellular location is the endoplasmic reticulum membrane. The enzyme catalyses a phosphate monoester + H2O = an alcohol + phosphate. Activity is independent of metal ions. In terms of biological role, component of the glideosome complex, an inner membrane complex structure involved in parasite gliding motility and host cell invasion. During the asexual blood stage, may play a role in the assembly and anchoring of the glideosome complex to the inner membrane complex. During the sexual stage in the vector mosquito midgut, protects gametocytes against host alternative complement pathway-mediated elimination by interacting with host complement inhibitor factor H. Has phosphatase activity towards nucleotides such as ATP, vitamins B1 and B6, phosphorylated sugars, glycerol phosphates and inositol triphosphates. However, the phosphatase activity is controversial. This chain is Glideosome-associated protein 50, found in Plasmodium falciparum (isolate 3D7).